We begin with the raw amino-acid sequence, 95 residues long: MSVLTFLKPRGSGSVARERLQLILAHERVENGRPDLIITLREEILNVIAKHVTVERDKVQIKLERGEGVSTLGVDIEFPVDAVIKPKAKAKRAIA.

This sequence belongs to the MinE family.

Functionally, prevents the cell division inhibition by proteins MinC and MinD at internal division sites while permitting inhibition at polar sites. This ensures cell division at the proper site by restricting the formation of a division septum at the midpoint of the long axis of the cell. This is Cell division topological specificity factor from Methylorubrum extorquens (strain CM4 / NCIMB 13688) (Methylobacterium extorquens).